Consider the following 248-residue polypeptide: Tropomyosin alpha-4 chain (248 aa).

The residue at position 2 (Ala2) is an N-acetylalanine. The stretch at 2 to 248 (AGLNSLEAVK…DQTLDELNCI (247 aa)) forms a coiled coil. Ser6 carries the phosphoserine modification. The tract at residues 16-47 (ALQQQADEAEDRAQGLQRELDGERERREKAEG) is disordered. Over residues 33 to 47 (RELDGERERREKAEG) the composition is skewed to basic and acidic residues. An N6-acetyllysine mark is found at Lys177 and Lys215. Thr216 carries the phosphothreonine modification.

This sequence belongs to the tropomyosin family. As to quaternary structure, homodimer. Heterodimer of an alpha (TPM1, TPM3 or TPM4) and a beta (TPM2) chain.

Its subcellular location is the cytoplasm. The protein localises to the cytoskeleton. Its function is as follows. Binds to actin filaments in muscle and non-muscle cells. Plays a central role, in association with the troponin complex, in the calcium dependent regulation of vertebrate striated muscle contraction. Smooth muscle contraction is regulated by interaction with caldesmon. In non-muscle cells is implicated in stabilizing cytoskeleton actin filaments. Binds calcium. This chain is Tropomyosin alpha-4 chain (TPM4), found in Equus caballus (Horse).